The chain runs to 453 residues: Putative folate transporter 2 (453 aa).

Transmembrane regions (helical) follow at residues 41-64 (IVVY…YYLF), 76-96 (SLIL…ALIT), 108-126 (PYLF…SLAL), 132-156 (IQAT…EALV), 176-195 (IASK…YFLE), 201-220 (YIFM…CLFL), 241-260 (FINT…YMSG), 280-300 (SFMG…IIVY), 312-330 (TLIF…PIIL), 346-366 (VLSG…PLFI), and 416-437 (LSMY…VPLL).

The protein belongs to the major facilitator superfamily. Folate-biopterin transporter (TC 2.A.71) family.

It localises to the plastid. Its subcellular location is the apicoplast. It is found in the membrane. Its function is as follows. Putative folate transporter. Required for sporogony of malaria parasites and host switching. In Plasmodium berghei (strain Anka), this protein is Putative folate transporter 2.